The following is a 175-amino-acid chain: NADH-quinone oxidoreductase subunit B (175 aa).

Cys49, Cys50, Cys115, and Cys145 together coordinate [4Fe-4S] cluster.

This sequence belongs to the complex I 20 kDa subunit family. In terms of assembly, NDH-1 is composed of 14 different subunits. Subunits NuoB, C, D, E, F, and G constitute the peripheral sector of the complex. Requires [4Fe-4S] cluster as cofactor.

The protein localises to the cell membrane. The catalysed reaction is a quinone + NADH + 5 H(+)(in) = a quinol + NAD(+) + 4 H(+)(out). In terms of biological role, NDH-1 shuttles electrons from NADH, via FMN and iron-sulfur (Fe-S) centers, to quinones in the respiratory chain. The immediate electron acceptor for the enzyme in this species is believed to be a menaquinone. Couples the redox reaction to proton translocation (for every two electrons transferred, four hydrogen ions are translocated across the cytoplasmic membrane), and thus conserves the redox energy in a proton gradient. This is NADH-quinone oxidoreductase subunit B from Heliobacterium modesticaldum (strain ATCC 51547 / Ice1).